The following is a 355-amino-acid chain: MYRLLIINPGSTSTKIGIYDDEKEIFEKTLRHSAEEIEKYNTIFDQFQFRKNVILDALKEANIEVSSLNAVVGRGGLLKPIVSGTYAVNQKMLEDLKVGVQGQHASNLGGIIANEIAKEINVPAYIVDPVVVDELDEVSRISGMADIPRKSIFHALNQKAVARRYAKEVGKKYEDLNLIVVHMGGGTSVGTHKDGRVIEVNNTLDGEGPFSPERSGGVPIGDLVRLCFSNKYTYEEVMKKINGKGGVVSYLNTIDFKAVVDKALEGDKKCALIYEAFTFQVAKEIGKCSTVLKGNVDAIILTGGIAYNEHVCNAIEDRVKFIAPVVRYGGEDELLALAEGGLRVLRGEEKAKEYK.

This sequence belongs to the acetokinase family.

It localises to the cytoplasm. The catalysed reaction is butanoate + ATP = butanoyl phosphate + ADP. The protein operates within lipid metabolism; butanoate metabolism. In terms of biological role, catalyzes the conversion of butyryl-CoA through butyryl phosphate to butyrate. The sequence is that of Butyrate kinase 1 (buk1) from Clostridium acetobutylicum (strain ATCC 824 / DSM 792 / JCM 1419 / IAM 19013 / LMG 5710 / NBRC 13948 / NRRL B-527 / VKM B-1787 / 2291 / W).